A 310-amino-acid chain; its full sequence is uncharacterized protein (310 aa).

Positions 5–62 (FTEENLLAFTTAARFGSFSKAAEELGLTTSAISYTIKRMETGLDVVLFTRSTRSIELT) constitute an HTH lysR-type domain. The segment at residues 22-42 (FSKAAEELGLTTSAISYTIKR) is a DNA-binding region (H-T-H motif).

This sequence belongs to the LysR transcriptional regulatory family.

This is an uncharacterized protein from Escherichia coli (strain K12).